The following is a 119-amino-acid chain: MSQFNAYHKNARISAQKVRLVADLVRGMFADEALDTLKYQPQRGARMLEKVIKSAVGNAQDPDQNSGRSHRIEELVITDVRVDGGPMFKRIQPRARGMAFMIKKRSSHIRVGLTHIENV.

Belongs to the universal ribosomal protein uL22 family. As to quaternary structure, part of the 50S ribosomal subunit.

Its function is as follows. This protein binds specifically to 23S rRNA; its binding is stimulated by other ribosomal proteins, e.g. L4, L17, and L20. It is important during the early stages of 50S assembly. It makes multiple contacts with different domains of the 23S rRNA in the assembled 50S subunit and ribosome. In terms of biological role, the globular domain of the protein is located near the polypeptide exit tunnel on the outside of the subunit, while an extended beta-hairpin is found that lines the wall of the exit tunnel in the center of the 70S ribosome. The polypeptide is Large ribosomal subunit protein uL22 (Rhodopirellula baltica (strain DSM 10527 / NCIMB 13988 / SH1)).